The chain runs to 108 residues: Iron-sulfur cluster assembly protein CyaY (108 aa).

This sequence belongs to the frataxin family.

Its function is as follows. Involved in iron-sulfur (Fe-S) cluster assembly. May act as a regulator of Fe-S biogenesis. The protein is Iron-sulfur cluster assembly protein CyaY of Burkholderia orbicola (strain MC0-3).